Here is a 212-residue protein sequence, read N- to C-terminus: Uridine kinase (212 aa).

Residue 13 to 20 (GGSGSGKT) participates in ATP binding.

Belongs to the uridine kinase family.

The protein resides in the cytoplasm. The catalysed reaction is uridine + ATP = UMP + ADP + H(+). It catalyses the reaction cytidine + ATP = CMP + ADP + H(+). It functions in the pathway pyrimidine metabolism; CTP biosynthesis via salvage pathway; CTP from cytidine: step 1/3. The protein operates within pyrimidine metabolism; UMP biosynthesis via salvage pathway; UMP from uridine: step 1/1. In Bacillus cereus (strain B4264), this protein is Uridine kinase.